We begin with the raw amino-acid sequence, 449 residues long: MIEPVRVIGGGIAGAEAAWQCARAGVPVVLSEMRPVRPSPAHHTDHLGELVCSNSFGAMATDRAPGLLKEELRRLGSLVIAVADAHAVPAGGALAVDRAVYTRELTERVANHPLIELRREEVTEIPAAGLVVFATGPLTSEPLAHGLQALTGLGYLSFFDAASPIVAGESLDTEKVFLASRYDRGEAAYYNCPMSEPEYRAFWEALASAEQAELKEFEHEERKFFEACLPVEELARRGYETLRYGPLKPVGLTDPRTGRWPFACVQLRQEDRAGRLWNLVGFQTNLKWGEQKRVFQMIPGLEQAEFVRLGVMHRNTFLCSPHLLAPTLQFHAHPRLLACGQLTGTEGYTAAVAGGWLAGTNAARLAQSRDPLVLPVETMAGALVDYVSHGDPKTFQPMPPNFALLPEITPRIRHKQQRYWAYRDRALAAIDTFGRTHGLGAAPALARAN.

Gly-9–Gly-14 lines the FAD pocket.

The protein belongs to the MnmG family. TrmFO subfamily. The cofactor is FAD.

It localises to the cytoplasm. It carries out the reaction uridine(54) in tRNA + (6R)-5,10-methylene-5,6,7,8-tetrahydrofolate + NADH + H(+) = 5-methyluridine(54) in tRNA + (6S)-5,6,7,8-tetrahydrofolate + NAD(+). It catalyses the reaction uridine(54) in tRNA + (6R)-5,10-methylene-5,6,7,8-tetrahydrofolate + NADPH + H(+) = 5-methyluridine(54) in tRNA + (6S)-5,6,7,8-tetrahydrofolate + NADP(+). Its function is as follows. Catalyzes the folate-dependent formation of 5-methyl-uridine at position 54 (M-5-U54) in all tRNAs. This Gloeobacter violaceus (strain ATCC 29082 / PCC 7421) protein is Methylenetetrahydrofolate--tRNA-(uracil-5-)-methyltransferase TrmFO.